A 146-amino-acid chain; its full sequence is 3-hydroxyacyl-[acyl-carrier-protein] dehydratase FabZ (146 aa).

Residue His48 is part of the active site.

It belongs to the thioester dehydratase family. FabZ subfamily.

Its subcellular location is the cytoplasm. It carries out the reaction a (3R)-hydroxyacyl-[ACP] = a (2E)-enoyl-[ACP] + H2O. Functionally, involved in unsaturated fatty acids biosynthesis. Catalyzes the dehydration of short chain beta-hydroxyacyl-ACPs and long chain saturated and unsaturated beta-hydroxyacyl-ACPs. The protein is 3-hydroxyacyl-[acyl-carrier-protein] dehydratase FabZ of Campylobacter jejuni subsp. jejuni serotype O:6 (strain 81116 / NCTC 11828).